The following is a 262-amino-acid chain: Polyamine aminopropyltransferase (262 aa).

Positions 1-249 (MWITQEITPY…DIHRAAFALP (249 aa)) constitute a PABS domain. Asn-29 contacts S-methyl-5'-thioadenosine. Position 83 (Asp-83) interacts with spermidine. Catalysis depends on Asp-155, which acts as the Proton acceptor.

This sequence belongs to the spermidine/spermine synthase family. In terms of assembly, homodimer or homotetramer.

The protein resides in the cytoplasm. It catalyses the reaction S-adenosyl 3-(methylsulfanyl)propylamine + putrescine = S-methyl-5'-thioadenosine + spermidine + H(+). The protein operates within amine and polyamine biosynthesis; spermidine biosynthesis; spermidine from putrescine: step 1/1. Functionally, catalyzes the irreversible transfer of a propylamine group from the amino donor S-adenosylmethioninamine (decarboxy-AdoMet) to putrescine (1,4-diaminobutane) to yield spermidine. The protein is Polyamine aminopropyltransferase of Helicobacter pylori (strain G27).